A 287-amino-acid polypeptide reads, in one-letter code: uncharacterized protein (287 aa).

3 disordered regions span residues 109–175 (QEES…SSQD), 203–223 (IPPP…SQPV), and 257–287 (KESE…SSEE). Low complexity predominate over residues 110–136 (EESSSSLEEGIIEDPVVATPSPASAAP). Over residues 143-152 (RKEFKNEKWK) the composition is skewed to basic and acidic residues. The span at 153–162 (EKKKQGRRRN) shows a compositional bias: basic residues. The segment covering 273-287 (SLEEASVHDRISSEE) has biased composition (basic and acidic residues).

Belongs to the chlamydial CPn_0623/CT_504/TC_0791 family.

This is an uncharacterized protein from Chlamydia muridarum (strain MoPn / Nigg).